The following is a 41-amino-acid chain: Large ribosomal subunit protein bL36 (41 aa).

This sequence belongs to the bacterial ribosomal protein bL36 family.

The chain is Large ribosomal subunit protein bL36 (rpmJ) from Agrobacterium fabrum (strain C58 / ATCC 33970) (Agrobacterium tumefaciens (strain C58)).